A 317-amino-acid polypeptide reads, in one-letter code: Putative 2-hydroxyacid dehydrogenase SAOUHSC_02577 (317 aa).

NAD(+)-binding positions include 155–156 (EI), 234–236 (ASR), and Asp-260. Residue Arg-236 is part of the active site. Glu-265 is an active-site residue. The Proton donor role is filled by His-283. Residue 283 to 286 (HIGN) participates in NAD(+) binding.

This sequence belongs to the D-isomer specific 2-hydroxyacid dehydrogenase family.

In Staphylococcus aureus (strain NCTC 8325 / PS 47), this protein is Putative 2-hydroxyacid dehydrogenase SAOUHSC_02577.